The following is a 426-amino-acid chain: Chaperone SurA (426 aa).

Residues 1 to 13 (MLGALFLSTAASA) form the signal peptide. 2 PpiC domains span residues 164–265 (SEEL…KLLD) and 274–373 (RDEV…EVLG).

It localises to the periplasm. The catalysed reaction is [protein]-peptidylproline (omega=180) = [protein]-peptidylproline (omega=0). In terms of biological role, chaperone involved in the correct folding and assembly of outer membrane proteins. Recognizes specific patterns of aromatic residues and the orientation of their side chains, which are found more frequently in integral outer membrane proteins. May act in both early periplasmic and late outer membrane-associated steps of protein maturation. This Pseudomonas fluorescens (strain ATCC BAA-477 / NRRL B-23932 / Pf-5) protein is Chaperone SurA.